A 269-amino-acid polypeptide reads, in one-letter code: MSRLEQRFAELKAEGRSALVTFVTAGDPGYDASLQILKGLPAAGADVIELGMPFTDPMADGVAIQLATLRALEAGQTLAKTLQMVREFRVDNQTTPIVLMGYYNPIHRFGVDTFVAEAKAAGVDGLIIVDLPPEHDAELATPAQAAGIDFIRLTTPTTDDARLPRVLERSSGFVYYVSVAGVTGAGSATTEHVTEAIARLRRHTDLPISVGFGIRTPEQAANIARLADGVVVGSALVDKIAQAKSADQAVTDVLSLCSALAEGVRGARR.

Residues Glu49 and Asp60 each act as proton acceptor in the active site.

This sequence belongs to the TrpA family. Tetramer of two alpha and two beta chains.

The catalysed reaction is (1S,2R)-1-C-(indol-3-yl)glycerol 3-phosphate + L-serine = D-glyceraldehyde 3-phosphate + L-tryptophan + H2O. It functions in the pathway amino-acid biosynthesis; L-tryptophan biosynthesis; L-tryptophan from chorismate: step 5/5. Its function is as follows. The alpha subunit is responsible for the aldol cleavage of indoleglycerol phosphate to indole and glyceraldehyde 3-phosphate. The protein is Tryptophan synthase alpha chain of Pseudomonas putida (strain ATCC 700007 / DSM 6899 / JCM 31910 / BCRC 17059 / LMG 24140 / F1).